A 714-amino-acid polypeptide reads, in one-letter code: Protein artemis (714 aa).

Disordered stretches follow at residues 391 to 500 (ELFD…ESNA), 516 to 577 (ESSE…TVLI), 598 to 617 (ALLSHDTPRDSQADDSRWKL), and 638 to 683 (EKDA…LTPD). Over residues 427-440 (NESTESYRANTAYT) the composition is skewed to polar residues. Residues 447-468 (VDCEESNDDDDDDDDDDKEDDS) are compositionally biased toward acidic residues. Polar residues-rich tracts occupy residues 484–500 (SIASCNGIPSNQQESNA) and 532–543 (GSQSLFSDSDGV). Low complexity predominate over residues 544–561 (SDSTHISSQNSSQSTHIS). Polar residues predominate over residues 562 to 577 (EQGSQGWDSQMDTVLI). Composition is skewed to basic and acidic residues over residues 603–615 (DTPRDSQADDSRW) and 660–670 (RTPDLELKRDS). A Phosphoserine; by ATM modification is found at Ser670.

Belongs to the DNA repair metallo-beta-lactamase (DRMBL) family. In terms of assembly, interacts with PRKDC. In terms of processing, phosphorylation on undefined residues by PRKDC may stimulate endonucleolytic activity on 5' and 3' hairpins and overhangs. PRKDC must remain present, even after phosphorylation, for efficient hairpin opening.

It localises to the nucleus. Required for V(D)J recombination, the process by which exons encoding the antigen-binding domains of immunoglobulins and T-cell receptor proteins are assembled from individual V, (D), and J gene segments. V(D)J recombination is initiated by the lymphoid specific RAG endonuclease complex, which generates site specific DNA double strand breaks (DSBs). These DSBs present two types of DNA end structures: hairpin sealed coding ends and phosphorylated blunt signal ends. These ends are independently repaired by the non homologous end joining (NHEJ) pathway to form coding and signal joints respectively. This protein exhibits single-strand specific 5'-3' exonuclease activity in isolation, and acquires endonucleolytic activity on 5' and 3' hairpins and overhangs when in a complex with PRKDC. The latter activity is required specifically for the resolution of closed hairpins prior to the formation of the coding joint. May also be required for the repair of complex DSBs induced by ionizing radiation, which require substantial end-processing prior to religation by NHEJ. This is Protein artemis (DCLRE1C) from Gallus gallus (Chicken).